Consider the following 266-residue polypeptide: MRDMQMERDTRNIAIDKVGVKDIRYPIVVMDKNKDQQHTVARINMYVDLPHHFKGTHMSRFVEILNQYRGEITMRNMGELLQEMKNRLDASCAHLKMDFPYFIEKQAPVSKARSLMEYRCRLRGTLDKQKDFVLGVEVPLTALCPCSREISERGAHNQRSAVKVEVRMSKFIWIEDLISWIEECGSAPVYALLKREDEKAVTEQAYDNPMFVEDIVRAVTLKLKSAPEITWFRVECENFESIHNHSAYAMVEFPPRTEDAEPAPAP.

The protein belongs to the GTP cyclohydrolase IV family.

The catalysed reaction is GTP + H2O = 7,8-dihydroneopterin 3'-triphosphate + formate + H(+). It functions in the pathway cofactor biosynthesis; 7,8-dihydroneopterin triphosphate biosynthesis; 7,8-dihydroneopterin triphosphate from GTP: step 1/1. In terms of biological role, converts GTP to 7,8-dihydroneopterin triphosphate. This Syntrophotalea carbinolica (strain DSM 2380 / NBRC 103641 / GraBd1) (Pelobacter carbinolicus) protein is GTP cyclohydrolase FolE2.